We begin with the raw amino-acid sequence, 305 residues long: uncharacterized protein (305 aa).

An N-terminal signal peptide occupies residues Met1–Val29.

This is an uncharacterized protein from Archaeoglobus fulgidus (strain ATCC 49558 / DSM 4304 / JCM 9628 / NBRC 100126 / VC-16).